We begin with the raw amino-acid sequence, 597 residues long: Putative diflavin flavoprotein A 3 (597 aa).

The segment at 59–254 (QRGTTANSYL…YPAQTYAPSH (196 aa)) is zinc metallo-hydrolase. A Flavodoxin-like domain is found at 283 to 421 (VALIYASAYG…MCEEAGTDFA (139 aa)). A flavodoxin-reductase-like region spans residues 449 to 597 (LGRLVGSLCV…VHHRKSGDHY (149 aa)).

It in the N-terminal section; belongs to the zinc metallo-hydrolase group 3 family. This sequence in the C-terminal section; belongs to the flavodoxin reductase family. It depends on Fe cation as a cofactor.

Functionally, mediates electron transfer from NADH to oxygen, reducing it to water. This modular protein has 3 redox cofactors, in other organisms the same activity requires 2 or 3 proteins. The protein is Putative diflavin flavoprotein A 3 (dfa3) of Synechocystis sp. (strain ATCC 27184 / PCC 6803 / Kazusa).